We begin with the raw amino-acid sequence, 458 residues long: Riboflavin transporter 2 (458 aa).

The next 5 helical transmembrane spans lie at leucine 11–valine 31, tryptophan 38–valine 58, proline 73–tryptophan 93, valine 97–valine 117, and glycine 146–cysteine 166. 4 N-linked (GlcNAc...) asparagine glycosylation sites follow: asparagine 168, asparagine 176, asparagine 182, and asparagine 199. Residues valine 204 to asparagine 224 form a helical membrane-spanning segment. Residues aspartate 249 to alanine 274 form a disordered region. The next 5 membrane-spanning stretches (helical) occupy residues phenylalanine 279–valine 299, leucine 325–proline 345, leucine 349–methionine 369, isoleucine 388–valine 408, and alanine 417–phenylalanine 437.

Belongs to the riboflavin transporter family.

Its subcellular location is the cell membrane. The catalysed reaction is riboflavin(in) = riboflavin(out). Its function is as follows. Plasma membrane transporter mediating the uptake by cells of the water soluble vitamin B2/riboflavin that plays a key role in biochemical oxidation-reduction reactions of the carbohydrate, lipid, and amino acid metabolism. This Salmo salar (Atlantic salmon) protein is Riboflavin transporter 2 (rft2).